A 507-amino-acid polypeptide reads, in one-letter code: GMP synthase [glutamine-hydrolyzing] (507 aa).

The 188-residue stretch at 3–190 (KILVIDYGSQ…IQGICGLKGS (188 aa)) folds into the Glutamine amidotransferase type-1 domain. Cys-77 functions as the Nucleophile in the catalytic mechanism. Residues His-164 and Glu-166 contribute to the active site. Residues 191 to 382 (WTLMDFVENK…LGLPREILYR (192 aa)) enclose the GMPS ATP-PPase domain. 218-224 (SGGVDSS) serves as a coordination point for ATP.

As to quaternary structure, homodimer.

It catalyses the reaction XMP + L-glutamine + ATP + H2O = GMP + L-glutamate + AMP + diphosphate + 2 H(+). The protein operates within purine metabolism; GMP biosynthesis; GMP from XMP (L-Gln route): step 1/1. Functionally, catalyzes the synthesis of GMP from XMP. The chain is GMP synthase [glutamine-hydrolyzing] from Petrotoga mobilis (strain DSM 10674 / SJ95).